Reading from the N-terminus, the 146-residue chain is Mediator of RNA polymerase II transcription subunit 10 (146 aa).

It belongs to the Mediator complex subunit 10 family. In terms of assembly, component of the Mediator complex.

Its subcellular location is the nucleus. Functionally, component of the Mediator complex, a coactivator involved in the regulated transcription of nearly all RNA polymerase II-dependent genes. Mediator functions as a bridge to convey information from gene-specific regulatory proteins to the basal RNA polymerase II transcription machinery. Mediator is recruited to promoters by direct interactions with regulatory proteins and serves as a scaffold for the assembly of a functional preinitiation complex with RNA polymerase II and the general transcription factors. This Scheffersomyces stipitis (strain ATCC 58785 / CBS 6054 / NBRC 10063 / NRRL Y-11545) (Yeast) protein is Mediator of RNA polymerase II transcription subunit 10 (NUT2).